A 179-amino-acid polypeptide reads, in one-letter code: Large ribosomal subunit protein uL6 (179 aa).

The protein belongs to the universal ribosomal protein uL6 family. As to quaternary structure, part of the 50S ribosomal subunit.

Functionally, this protein binds to the 23S rRNA, and is important in its secondary structure. It is located near the subunit interface in the base of the L7/L12 stalk, and near the tRNA binding site of the peptidyltransferase center. This Desulfovibrio desulfuricans (strain ATCC 27774 / DSM 6949 / MB) protein is Large ribosomal subunit protein uL6.